The sequence spans 268 residues: Probable RNA methyltransferase C2A9.10 (268 aa).

The 236-residue stretch at 23-258 (DPRLKCLPDS…RTMYIYKKKG (236 aa)) folds into the Bin3-type SAM domain.

This sequence belongs to the methyltransferase superfamily.

In terms of biological role, probable RNA methyltransferase. This chain is Probable RNA methyltransferase C2A9.10, found in Schizosaccharomyces pombe (strain 972 / ATCC 24843) (Fission yeast).